We begin with the raw amino-acid sequence, 168 residues long: CDP-archaeol synthase (168 aa).

Transmembrane regions (helical) follow at residues 4-24, 51-71, 81-101, 112-132, and 138-158; these read IFEAFWYILPAYFANSSPVVL, GFFGGITVGTVVGTIQHLMFP, VGVAFLLSLGALVGDLIGSFI, PAVGLDQWGFLISALCFAYPL, and GEVLFLLVVTPVIHWLANVFA.

It belongs to the CDP-archaeol synthase family. The cofactor is Mg(2+).

It is found in the cell membrane. It catalyses the reaction 2,3-bis-O-(geranylgeranyl)-sn-glycerol 1-phosphate + CTP + H(+) = CDP-2,3-bis-O-(geranylgeranyl)-sn-glycerol + diphosphate. It functions in the pathway membrane lipid metabolism; glycerophospholipid metabolism. Functionally, catalyzes the formation of CDP-2,3-bis-(O-geranylgeranyl)-sn-glycerol (CDP-archaeol) from 2,3-bis-(O-geranylgeranyl)-sn-glycerol 1-phosphate (DGGGP) and CTP. This reaction is the third ether-bond-formation step in the biosynthesis of archaeal membrane lipids. This Pyrococcus abyssi (strain GE5 / Orsay) protein is CDP-archaeol synthase.